The chain runs to 1436 residues: Gag-Pol polyprotein (1436 aa).

Gly-2 carries N-myristoyl glycine; by host lipidation. Residues 7 to 31 (VLSGGKLDKWEKIRLRPRGKKRYKL) form an interaction with Gp41 region. The interaction with host CALM1 stretch occupies residues 8–43 (LSGGKLDKWEKIRLRPRGKKRYKLKHIVWASRELER). An interaction with host AP3D1 region spans residues 12–19 (KLDKWEKI). Residues 14 to 33 (DKWEKIRLRPRGKKRYKLKH) are interaction with membrane phosphatidylinositol 4,5-bisphosphate and RNA. A Nuclear export signal motif is present at residues 16–22 (WEKIRLR). The short motif at 26-32 (KKRYKLK) is the Nuclear localization signal element. Residues 73 to 77 (EELKS) are interaction with membrane phosphatidylinositol 4,5-bisphosphate. The segment at 106–128 (EEQNKSKKKAQQAAADTGNGSQV) is disordered. Tyr-132 carries the post-translational modification Phosphotyrosine; by host. An interaction with human PPIA/CYPA and NUP153 region spans residues 189–227 (NTVGGHQAAMQMLKETINEEAAEWDRLHPVHAGPIAPGQ). Residues 277-363 (YSPISILDIR…GGPSHKARIL (87 aa)) form a dimerization/Multimerization of capsid protein p24 region. 2 consecutive CCHC-type zinc fingers follow at residues 390-407 (VKCF…NCRA) and 411-428 (KGCW…DCTN). Residues 446–465 (KARELSSEQTRANSPTRREL) are disordered. A dimerization of protease region spans residues 490–494 (PQITL). One can recognise a Peptidase A2 domain in the interval 509–578 (KEALLDTGAD…TPVNIIGRNL (70 aa)). Asp-514 functions as the For protease activity; shared with dimeric partner in the catalytic mechanism. Dimerization of protease regions lie at residues 538–544 (GIGGFIK) and 577–589 (NLLT…LNFP). The Reverse transcriptase domain maps to 632-822 (EGKISKIGPE…PPFLWMGYEL (191 aa)). The Mg(2+) site is built by Asp-698, Asp-773, and Asp-774. The tract at residues 815-823 (FLWMGYELH) is RT 'primer grip'. A Tryptophan repeat motif motif is present at residues 986-1002 (WEAWWTEYWQATWIPEW). Positions 1022–1145 (IIGAETFYVD…VDRLVSTGIR (124 aa)) constitute an RNase H type-1 domain. The Mg(2+) site is built by Asp-1031, Glu-1066, Asp-1086, and Asp-1137. The Integrase-type zinc-finger motif lies at 1151–1192 (DGIDKAQDEHEKYHSNWRAMASDFNLPPVVAKEIVASCDKCQ). Zn(2+) is bound by residues His-1160, His-1164, Cys-1188, and Cys-1191. The Integrase catalytic domain occupies 1202 to 1352 (VDCSPGIWQL…SAGERIVDII (151 aa)). Residues Asp-1212, Asp-1264, and Glu-1300 each coordinate Mg(2+). The segment at residues 1371-1418 (FRVYYRDSRDPLWKGHAKLLWKGEGAVVIQDNSDIKVVPRRKAKIIRD) is a DNA-binding region (integrase-type).

In terms of assembly, homotrimer; further assembles as hexamers of trimers. Interacts with gp41 (via C-terminus). Interacts with host CALM1; this interaction induces a conformational change in the Matrix protein, triggering exposure of the myristate group. Interacts with host AP3D1; this interaction allows the polyprotein trafficking to multivesicular bodies during virus assembly. Part of the pre-integration complex (PIC) which is composed of viral genome, matrix protein, Vpr and integrase. Homodimer; the homodimer further multimerizes as homohexamers or homopentamers. Interacts with human PPIA/CYPA; This interaction stabilizes the capsid. Interacts with human NUP153. Interacts with host PDZD8; this interaction stabilizes the capsid. Interacts with monkey TRIM5; this interaction destabilizes the capsid. As to quaternary structure, homodimer, whose active site consists of two apposed aspartic acid residues. In terms of assembly, heterodimer of p66 RT and p51 RT (RT p66/p51). Heterodimerization of RT is essential for DNA polymerase activity. The overall folding of the subdomains is similar in p66 RT and p51 RT but the spatial arrangements of the subdomains are dramatically different. Homotetramer; may further associate as a homohexadecamer. Part of the pre-integration complex (PIC) which is composed of viral genome, matrix protein, Vpr and integrase. Interacts with human SMARCB1/INI1 and human PSIP1/LEDGF isoform 1. Interacts with human KPNA3; this interaction might play a role in nuclear import of the pre-integration complex. Interacts with human NUP153; this interaction might play a role in nuclear import of the pre-integration complex. The cofactor is Mg(2+). In terms of processing, specific enzymatic cleavages by the viral protease yield mature proteins. The protease is released by autocatalytic cleavage. The polyprotein is cleaved during and after budding, this process is termed maturation. Proteolytic cleavage of p66 RT removes the RNase H domain to yield the p51 RT subunit. Nucleocapsid protein p7 might be further cleaved after virus entry. Post-translationally, tyrosine phosphorylated presumably in the virion by a host kinase. Phosphorylation is apparently not a major regulator of membrane association. Phosphorylated possibly by host MAPK1; this phosphorylation is necessary for Pin1-mediated virion uncoating. In terms of processing, methylated by host PRMT6, impairing its function by reducing RNA annealing and the initiation of reverse transcription.

It is found in the host cell membrane. Its subcellular location is the host endosome. The protein resides in the host multivesicular body. It localises to the virion membrane. The protein localises to the host nucleus. It is found in the host cytoplasm. Its subcellular location is the virion. The catalysed reaction is Specific for a P1 residue that is hydrophobic, and P1' variable, but often Pro.. It carries out the reaction Endohydrolysis of RNA in RNA/DNA hybrids. Three different cleavage modes: 1. sequence-specific internal cleavage of RNA. Human immunodeficiency virus type 1 and Moloney murine leukemia virus enzymes prefer to cleave the RNA strand one nucleotide away from the RNA-DNA junction. 2. RNA 5'-end directed cleavage 13-19 nucleotides from the RNA end. 3. DNA 3'-end directed cleavage 15-20 nucleotides away from the primer terminus.. The enzyme catalyses 3'-end directed exonucleolytic cleavage of viral RNA-DNA hybrid.. It catalyses the reaction DNA(n) + a 2'-deoxyribonucleoside 5'-triphosphate = DNA(n+1) + diphosphate. Protease: The viral protease is inhibited by many synthetic protease inhibitors (PIs), such as amprenavir, atazanavir, indinavir, loprinavir, nelfinavir, ritonavir and saquinavir. Use of protease inhibitors in tritherapy regimens permit more ambitious therapeutic strategies. Reverse transcriptase/ribonuclease H: RT can be inhibited either by nucleoside RT inhibitors (NRTIs) or by non nucleoside RT inhibitors (NNRTIs). NRTIs act as chain terminators, whereas NNRTIs inhibit DNA polymerization by binding a small hydrophobic pocket near the RT active site and inducing an allosteric change in this region. Classical NRTIs are abacavir, adefovir (PMEA), didanosine (ddI), lamivudine (3TC), stavudine (d4T), tenofovir (PMPA), zalcitabine (ddC), and zidovudine (AZT). Classical NNRTIs are atevirdine (BHAP U-87201E), delavirdine, efavirenz (DMP-266), emivirine (I-EBU), and nevirapine (BI-RG-587). The tritherapies used as a basic effective treatment of AIDS associate two NRTIs and one NNRTI. In terms of biological role, mediates, with Gag polyprotein, the essential events in virion assembly, including binding the plasma membrane, making the protein-protein interactions necessary to create spherical particles, recruiting the viral Env proteins, and packaging the genomic RNA via direct interactions with the RNA packaging sequence (Psi). Gag-Pol polyprotein may regulate its own translation, by the binding genomic RNA in the 5'-UTR. At low concentration, the polyprotein would promote translation, whereas at high concentration, the polyprotein would encapsidate genomic RNA and then shut off translation. Targets the polyprotein to the plasma membrane via a multipartite membrane-binding signal, that includes its myristoylated N-terminus. Matrix protein is part of the pre-integration complex. Implicated in the release from host cell mediated by Vpu. Binds to RNA. Functionally, forms the conical core that encapsulates the genomic RNA-nucleocapsid complex in the virion. Most core are conical, with only 7% tubular. The core is constituted by capsid protein hexamer subunits. The core is disassembled soon after virion entry. Host restriction factors such as TRIM5-alpha or TRIMCyp bind retroviral capsids and cause premature capsid disassembly, leading to blocks in reverse transcription. Capsid restriction by TRIM5 is one of the factors which restricts HIV-1 to the human species. Host PIN1 apparently facilitates the virion uncoating. On the other hand, interactions with PDZD8 or CYPA stabilize the capsid. Its function is as follows. Encapsulates and protects viral dimeric unspliced genomic RNA (gRNA). Binds these RNAs through its zinc fingers. Acts as a nucleic acid chaperone which is involved in rearangement of nucleic acid secondary structure during gRNA retrotranscription. Also facilitates template switch leading to recombination. As part of the polyprotein, participates in gRNA dimerization, packaging, tRNA incorporation and virion assembly. In terms of biological role, aspartyl protease that mediates proteolytic cleavages of Gag and Gag-Pol polyproteins during or shortly after the release of the virion from the plasma membrane. Cleavages take place as an ordered, step-wise cascade to yield mature proteins. This process is called maturation. Displays maximal activity during the budding process just prior to particle release from the cell. Also cleaves Nef and Vif, probably concomitantly with viral structural proteins on maturation of virus particles. Hydrolyzes host EIF4GI and PABP1 in order to shut off the capped cellular mRNA translation. The resulting inhibition of cellular protein synthesis serves to ensure maximal viral gene expression and to evade host immune response. Also mediates cleavage of host YTHDF3. Mediates cleavage of host CARD8, thereby activating the CARD8 inflammasome, leading to the clearance of latent HIV-1 in patient CD4(+) T-cells after viral reactivation; in contrast, HIV-1 can evade CARD8-sensing when its protease remains inactive in infected cells prior to viral budding. Multifunctional enzyme that converts the viral RNA genome into dsDNA in the cytoplasm, shortly after virus entry into the cell. This enzyme displays a DNA polymerase activity that can copy either DNA or RNA templates, and a ribonuclease H (RNase H) activity that cleaves the RNA strand of RNA-DNA heteroduplexes in a partially processive 3' to 5' endonucleasic mode. Conversion of viral genomic RNA into dsDNA requires many steps. A tRNA(3)-Lys binds to the primer-binding site (PBS) situated at the 5'-end of the viral RNA. RT uses the 3' end of the tRNA primer to perform a short round of RNA-dependent minus-strand DNA synthesis. The reading proceeds through the U5 region and ends after the repeated (R) region which is present at both ends of viral RNA. The portion of the RNA-DNA heteroduplex is digested by the RNase H, resulting in a ssDNA product attached to the tRNA primer. This ssDNA/tRNA hybridizes with the identical R region situated at the 3' end of viral RNA. This template exchange, known as minus-strand DNA strong stop transfer, can be either intra- or intermolecular. RT uses the 3' end of this newly synthesized short ssDNA to perform the RNA-dependent minus-strand DNA synthesis of the whole template. RNase H digests the RNA template except for two polypurine tracts (PPTs) situated at the 5'-end and near the center of the genome. It is not clear if both polymerase and RNase H activities are simultaneous. RNase H probably can proceed both in a polymerase-dependent (RNA cut into small fragments by the same RT performing DNA synthesis) and a polymerase-independent mode (cleavage of remaining RNA fragments by free RTs). Secondly, RT performs DNA-directed plus-strand DNA synthesis using the PPTs that have not been removed by RNase H as primers. PPTs and tRNA primers are then removed by RNase H. The 3' and 5' ssDNA PBS regions hybridize to form a circular dsDNA intermediate. Strand displacement synthesis by RT to the PBS and PPT ends produces a blunt ended, linear dsDNA copy of the viral genome that includes long terminal repeats (LTRs) at both ends. Functionally, catalyzes viral DNA integration into the host chromosome, by performing a series of DNA cutting and joining reactions. This enzyme activity takes place after virion entry into a cell and reverse transcription of the RNA genome in dsDNA. The first step in the integration process is 3' processing. This step requires a complex comprising the viral genome, matrix protein, Vpr and integrase. This complex is called the pre-integration complex (PIC). The integrase protein removes 2 nucleotides from each 3' end of the viral DNA, leaving recessed CA OH's at the 3' ends. In the second step, the PIC enters cell nucleus. This process is mediated through integrase and Vpr proteins, and allows the virus to infect a non dividing cell. This ability to enter the nucleus is specific of lentiviruses, other retroviruses cannot and rely on cell division to access cell chromosomes. In the third step, termed strand transfer, the integrase protein joins the previously processed 3' ends to the 5' ends of strands of target cellular DNA at the site of integration. The 5'-ends are produced by integrase-catalyzed staggered cuts, 5 bp apart. A Y-shaped, gapped, recombination intermediate results, with the 5'-ends of the viral DNA strands and the 3' ends of target DNA strands remaining unjoined, flanking a gap of 5 bp. The last step is viral DNA integration into host chromosome. This involves host DNA repair synthesis in which the 5 bp gaps between the unjoined strands are filled in and then ligated. Since this process occurs at both cuts flanking the HIV genome, a 5 bp duplication of host DNA is produced at the ends of HIV-1 integration. Alternatively, Integrase may catalyze the excision of viral DNA just after strand transfer, this is termed disintegration. This chain is Gag-Pol polyprotein (gag-pol), found in Human immunodeficiency virus type 1 group M subtype B (isolate RF/HAT3) (HIV-1).